The primary structure comprises 219 residues: Ion-translocating oxidoreductase complex subunit G (219 aa).

Residues 25 to 45 traverse the membrane as a helical segment; it reads GLLLGLFSLVSALMLALASDA. T187 carries the FMN phosphoryl threonine modification.

The protein belongs to the RnfG family. As to quaternary structure, the complex is composed of six subunits: RnfA, RnfB, RnfC, RnfD, RnfE and RnfG. It depends on FMN as a cofactor.

The protein resides in the cellular chromatophore membrane. Part of a membrane-bound complex that couples electron transfer with translocation of ions across the membrane. In Cereibacter sphaeroides (strain ATCC 17023 / DSM 158 / JCM 6121 / CCUG 31486 / LMG 2827 / NBRC 12203 / NCIMB 8253 / ATH 2.4.1.) (Rhodobacter sphaeroides), this protein is Ion-translocating oxidoreductase complex subunit G.